Reading from the N-terminus, the 57-residue chain is Large ribosomal subunit protein bL33 (57 aa).

It belongs to the bacterial ribosomal protein bL33 family.

The chain is Large ribosomal subunit protein bL33 from Shewanella sp. (strain W3-18-1).